Here is a 792-residue protein sequence, read N- to C-terminus: Homeobox protein HAZ1 (792 aa).

The tract at residues 1–154 (MDKTTTSDLV…RPPKGGTPKD (154 aa)) is disordered. The segment covering 15–36 (NIGSNAGSAQEPLTTNGKTSGV) has biased composition (polar residues). Positions 38 to 49 (NRYKQTVKRGRK) are enriched in basic residues. Residues 51–67 (SQISPSKTYPLRSSHSN) are compositionally biased toward polar residues. Over residues 95-104 (VAKKRKRSKP) the composition is skewed to basic residues. The segment covering 116–127 (TSEKKNKAHNEL) has biased composition (basic and acidic residues). Residues 244–301 (DIFCAACGSKDVTLKNDIILCDGICDRGFHQYCLNPPLLAEDIPQGDEGWLCPACDCK) form a PHD-type zinc finger. 2 disordered regions span residues 338–495 (QIDA…NSNL) and 529–599 (YGKA…SDQQ). Positions 345-354 (PSDDSADNDY) are enriched in acidic residues. The span at 362–371 (HKVDEEKSSG) shows a compositional bias: basic and acidic residues. Acidic residues-rich tracts occupy residues 373-389 (DGGE…EDSE) and 433-453 (DESN…DDFC). Residues 610–669 (STAKNRHFGPAINQKLKAHFKEDPYPSRATKENLAQELGLTFNQVTKWFSSTRHYARVAA) constitute a DNA-binding region (homeobox). 2 disordered regions span residues 677–697 (ENHT…QLRG) and 711–792 (SEER…KTGR). Composition is skewed to polar residues over residues 716 to 737 (GQSN…QSVA) and 746 to 760 (NQGN…TPNA). Residues 774 to 792 (DEARRKAVQRELRKMKTGR) are compositionally biased toward basic and acidic residues.

It belongs to the PHD-associated homeobox family. As to expression, expressed in roots, leaves, stems, panicle and seeds.

It is found in the nucleus. Its function is as follows. Transcriptional repressor involved in the regulation of gibberrelin (GA) signaling. Binds to the 5'-GATC-3' motif of HD16/EL1 promoter. Functions as a positive regulator of GA signaling by suppressing the expression of HD16/EL1, a negative regulator of GA signaling. In Oryza sativa subsp. japonica (Rice), this protein is Homeobox protein HAZ1.